The chain runs to 473 residues: Cannabinoid receptor 1 (473 aa).

Topologically, residues 1-118 are extracellular; sequence MKSILDGLAD…CFMILTASQQ (118 aa). Residues 2-23 are required for mitochondrial localization; the sequence is KSILDGLADTTFRTITTDLLYM. N-linked (GlcNAc...) asparagine glycans are attached at residues Asn79 and Asn85. A helical transmembrane segment spans residues 119–144; that stretch reads LIIAVLSLTLGTFTVLENFLVLCVIL. The Cytoplasmic segment spans residues 145-156; sequence QSRTLRCRPSYH. The helical transmembrane segment at 157 to 177 threads the bilayer; the sequence is FIGSLAVADLLGSVIFVYSFL. Topologically, residues 178-189 are extracellular; it reads DFHVFHRKDSSN. Residues 190–214 traverse the membrane as a helical segment; that stretch reads VFLFKLGGVTASFTASVGSLFLTAI. The Cytoplasmic portion of the chain corresponds to 215–234; the sequence is DRYISIHRPLAYKRIVTRTK. A helical transmembrane segment spans residues 235–257; the sequence is AVIAFCVMWTIAIIIAVLPLLGW. Over 258–275 the chain is Extracellular; that stretch reads NCKKLKSVCSDIFPLIDE. Residues 276-301 traverse the membrane as a helical segment; it reads NYLMFWIGVTSILLLFIVYAYVYILW. Topologically, residues 302–346 are cytoplasmic; it reads KAHSHAVRMLQRGTQKSIIIHTSEDGKVQITRPEQTRMDIRLAKT. The helical transmembrane segment at 347–367 threads the bilayer; sequence LVLILVVLIICWGPLLAIMVY. Over 368–379 the chain is Extracellular; the sequence is DVFGKMNNPIKT. Residues 380 to 401 traverse the membrane as a helical segment; sequence VFAFCSMLCLMDSTVNPIIYAL. Over 402-473 the chain is Cytoplasmic; that stretch reads RSQDLRHAFL…VSTETSGEAV (72 aa). Cys417 carries S-palmitoyl cysteine lipidation.

Belongs to the G-protein coupled receptor 1 family. Post-translationally, palmitoylation at Cys-417 is important for recruitment at both plasma membrane and lipid rafts and association with G protein alpha subunits.

It is found in the cell membrane. The protein localises to the mitochondrion outer membrane. Its subcellular location is the cell projection. It localises to the axon. The protein resides in the presynapse. With respect to regulation, hemopressin, a peptide derived from hemoglobin subunit alpha (HBA1 and/or HBA2), acts as an antagonist peptide: hemopressin-binding efficiently blocks cannabinoid receptor CNR1 and subsequent signaling. Its function is as follows. G-protein coupled receptor for cannabinoids. Mediates many cannabinoid-induced effects in the central nervous system (CNS), as well as in peripheral tissues. Regulates cellular respiration and energy production in response to cannabinoids. Signaling typically involves reduction in cyclic AMP. In Taricha granulosa (Roughskin newt), this protein is Cannabinoid receptor 1 (CNR1).